The sequence spans 368 residues: tRNA(Met) cytidine acetate ligase (368 aa).

Residues 7 to 20, G96, N152, and R175 contribute to the ATP site; that span reads IAEF…HKYL.

It belongs to the TmcAL family.

The protein resides in the cytoplasm. It carries out the reaction cytidine(34) in elongator tRNA(Met) + acetate + ATP = N(4)-acetylcytidine(34) in elongator tRNA(Met) + AMP + diphosphate. Its function is as follows. Catalyzes the formation of N(4)-acetylcytidine (ac(4)C) at the wobble position of elongator tRNA(Met), using acetate and ATP as substrates. First activates an acetate ion to form acetyladenylate (Ac-AMP) and then transfers the acetyl group to tRNA to form ac(4)C34. The sequence is that of tRNA(Met) cytidine acetate ligase from Streptococcus pyogenes serotype M28 (strain MGAS6180).